The sequence spans 219 residues: uncharacterized protein (219 aa).

The signal sequence occupies residues 1-22 (MKKRRKICYCNTALLLMILLAG). Cys23 carries N-palmitoyl cysteine lipidation. Cys23 carries the S-diacylglycerol cysteine lipid modification. The disordered stretch occupies residues 26–89 (SKDGEAQQPS…SAEEKSKEDN (64 aa)). The segment covering 32–42 (QQPSNQASAVQ) has biased composition (polar residues). The span at 43 to 61 (TDEKHTEPEESTKIRKDEA) shows a compositional bias: basic and acidic residues.

Its subcellular location is the cell membrane. This is an uncharacterized protein from Bacillus subtilis (strain 168).